The primary structure comprises 141 residues: uncharacterized protein (141 aa).

Residues 8-112 (IGQVFKTKSL…VLDKQPKRNE (105 aa)) enclose the MaoC-like domain.

This is an uncharacterized protein from Bacillus subtilis (strain 168).